A 272-amino-acid chain; its full sequence is Orotidine 5'-phosphate decarboxylase (272 aa).

The active-site Proton donor is Lys96.

Belongs to the OMP decarboxylase family. Type 2 subfamily.

It carries out the reaction orotidine 5'-phosphate + H(+) = UMP + CO2. Its pathway is pyrimidine metabolism; UMP biosynthesis via de novo pathway; UMP from orotate: step 2/2. This is Orotidine 5'-phosphate decarboxylase from Phocaeicola vulgatus (strain ATCC 8482 / DSM 1447 / JCM 5826 / CCUG 4940 / NBRC 14291 / NCTC 11154) (Bacteroides vulgatus).